The following is a 614-amino-acid chain: Membrane protein insertase YidC (614 aa).

Residues 6–26 (IVLLIIFSTSLLFLWDAWIKE) traverse the membrane as a helical segment. Polar residues-rich tracts occupy residues 34–48 (PAITQADSSAGSTQS) and 60–70 (ELTSSQASPDT). The tract at residues 34–87 (PAITQADSSAGSTQSRNDDSLPVPGSELTSSQASPDTNGIPASGGNGDSVTPRL) is disordered. Transmembrane regions (helical) follow at residues 380–400 (WGVAIILLTMTVKLLFFPLSA), 450–470 (FPILVQIPVFIALYWTILAAV), 484–504 (LSSPDPFYMLPLLMGISMFVQ), and 524–544 (PVAFSAIFFFFPAGLVLYSLV). The segment at 562 to 614 (TAPSKDTPEPPVSKQVNSSENPETTANSPADSPKQPQTPANNPRKMYKRTRKK) is disordered. A compositionally biased stretch (polar residues) spans 575–602 (KQVNSSENPETTANSPADSPKQPQTPAN).

It belongs to the OXA1/ALB3/YidC family. Type 1 subfamily. In terms of assembly, interacts with the Sec translocase complex via SecD. Specifically interacts with transmembrane segments of nascent integral membrane proteins during membrane integration.

Its subcellular location is the cell inner membrane. Its function is as follows. Required for the insertion and/or proper folding and/or complex formation of integral membrane proteins into the membrane. Involved in integration of membrane proteins that insert both dependently and independently of the Sec translocase complex, as well as at least some lipoproteins. Aids folding of multispanning membrane proteins. This chain is Membrane protein insertase YidC, found in Nitrosomonas europaea (strain ATCC 19718 / CIP 103999 / KCTC 2705 / NBRC 14298).